A 413-amino-acid polypeptide reads, in one-letter code: Transmembrane protein 237B (413 aa).

The segment at 1–162 is disordered; the sequence is MDPEAKVSSS…EDDDVITDPQ (162 aa). The span at 112-122 shows a compositional bias: polar residues; the sequence is DLVSNGDTLDQ. The next 4 helical transmembrane spans lie at 233–253, 274–294, 312–332, and 360–380; these read VIGLFSHGFLAGYAVWNIIVV, LAYPAQSLLYLLLALSTVSAF, LSPVALASVFYFSALVLSLSQ, and ILYPWITVNLVVSLLVGLAWI.

It belongs to the TMEM237 family.

It is found in the membrane. Its subcellular location is the cell projection. The protein resides in the cilium. In terms of biological role, component of the transition zone in primary cilia. Required for ciliogenesis. The chain is Transmembrane protein 237B (tmem237b) from Danio rerio (Zebrafish).